Consider the following 332-residue polypeptide: MGRVKLEIKRIENTTNRQVTFSKRRNGLIKKAYELSILCDIDIALLMFSPSDRLSLFSGKTRIEDVFSRYINLSDQERENALVFPDQSRRPDFQSKEYLLRTLQQLKAENDIALQLTNPTAINSDVEELEHEVYKLQQQLLMAEEELRKYEPDPIRFTTMEEYETCEKQLMDTLTRVNQRREHILSQDQLSSYEASALQQQQSMGGPFGNDVVGGWLTENGPNEAHLFDASAHSAMYETLLQGSSSSSNQNNIMGESNVSNHNGDMFQEWAQAYNSTTAHNPSTLFPPMQHQHGLVVDPNIEEIEIPVMKKDAQADHEVSDYDIRMPQLSSQ.

Residues 1–61 (MGRVKLEIKR…DRLSLFSGKT (61 aa)) enclose the MADS-box domain. Residues 120-151 (TAINSDVEELEHEVYKLQQQLLMAEEELRKYE) adopt a coiled-coil conformation.

In terms of assembly, forms a heterodimer with AGL30. Expressed in pollen.

The protein resides in the nucleus. Probable transcription factor that forms a heterodimer with the MADS-box protein AGL30 and is involved in the regulation of pollen maturation at the late stages of pollen development and pollen tube growth. This Arabidopsis thaliana (Mouse-ear cress) protein is Agamous-like MADS-box protein AGL66.